The sequence spans 163 residues: Large ribosomal subunit protein uL10 (163 aa).

Belongs to the universal ribosomal protein uL10 family. Part of the ribosomal stalk of the 50S ribosomal subunit. The N-terminus interacts with L11 and the large rRNA to form the base of the stalk. The C-terminus forms an elongated spine to which L12 dimers bind in a sequential fashion forming a multimeric L10(L12)X complex.

Functionally, forms part of the ribosomal stalk, playing a central role in the interaction of the ribosome with GTP-bound translation factors. This is Large ribosomal subunit protein uL10 from Histophilus somni (strain 2336) (Haemophilus somnus).